We begin with the raw amino-acid sequence, 183 residues long: uncharacterized protein (183 aa).

This sequence to A.muscaria DOPA 4,5-dioxygenase.

This is an uncharacterized protein from Botryotinia fuckeliana (Noble rot fungus).